Here is a 49-residue protein sequence, read N- to C-terminus: Large ribosomal subunit protein bL33 (49 aa).

It belongs to the bacterial ribosomal protein bL33 family.

The sequence is that of Large ribosomal subunit protein bL33 from Clostridium perfringens (strain ATCC 13124 / DSM 756 / JCM 1290 / NCIMB 6125 / NCTC 8237 / Type A).